We begin with the raw amino-acid sequence, 431 residues long: Glucose-1-phosphate adenylyltransferase (431 aa).

Lys-39 lines the beta-D-fructose 1,6-bisphosphate pocket. The AMP site is built by Arg-40, His-46, and Arg-52. Tyr-114 serves as a coordination point for alpha-D-glucose 1-phosphate. An AMP-binding site is contributed by Arg-130. Residues Gly-179, 194-195 (EK), and Ser-212 contribute to the alpha-D-glucose 1-phosphate site. Glu-370 and Arg-386 together coordinate AMP. Residues 419-423 (REMLR) and 429-431 (QER) each bind beta-D-fructose 1,6-bisphosphate.

Belongs to the bacterial/plant glucose-1-phosphate adenylyltransferase family. Homotetramer.

It catalyses the reaction alpha-D-glucose 1-phosphate + ATP + H(+) = ADP-alpha-D-glucose + diphosphate. Its pathway is glycan biosynthesis; glycogen biosynthesis. Its activity is regulated as follows. Allosterically activated by fructose-1,6-bisphosphate (F16BP) and inhibited by AMP. Functionally, involved in the biosynthesis of ADP-glucose, a building block required for the elongation reactions to produce glycogen. Catalyzes the reaction between ATP and alpha-D-glucose 1-phosphate (G1P) to produce pyrophosphate and ADP-Glc. This is Glucose-1-phosphate adenylyltransferase from Shigella dysenteriae serotype 1 (strain Sd197).